Reading from the N-terminus, the 219-residue chain is Protein-methionine-sulfoxide reductase heme-binding subunit MsrQ (219 aa).

5 helical membrane passes run 17–37 (AKPL…YAAW), 88–108 (LFAY…DMGF), 121–141 (PFIL…ATSF), 153–173 (WQLL…HFFW), and 184–204 (VFVY…NHWA).

This sequence belongs to the MsrQ family. As to quaternary structure, heterodimer of a catalytic subunit (MsrP) and a heme-binding subunit (MsrQ). The cofactor is FMN. Requires heme b as cofactor.

The protein localises to the cell inner membrane. Part of the MsrPQ system that repairs oxidized periplasmic proteins containing methionine sulfoxide residues (Met-O), using respiratory chain electrons. Thus protects these proteins from oxidative-stress damage caused by reactive species of oxygen and chlorine generated by the host defense mechanisms. MsrPQ is essential for the maintenance of envelope integrity under bleach stress, rescuing a wide series of structurally unrelated periplasmic proteins from methionine oxidation. MsrQ provides electrons for reduction to the reductase catalytic subunit MsrP, using the quinone pool of the respiratory chain. The sequence is that of Protein-methionine-sulfoxide reductase heme-binding subunit MsrQ from Polaromonas naphthalenivorans (strain CJ2).